The primary structure comprises 331 residues: Phenylalanine--tRNA ligase alpha subunit (331 aa).

Glu-256 is a Mg(2+) binding site.

The protein belongs to the class-II aminoacyl-tRNA synthetase family. Phe-tRNA synthetase alpha subunit type 1 subfamily. Tetramer of two alpha and two beta subunits. The cofactor is Mg(2+).

Its subcellular location is the cytoplasm. The catalysed reaction is tRNA(Phe) + L-phenylalanine + ATP = L-phenylalanyl-tRNA(Phe) + AMP + diphosphate + H(+). This chain is Phenylalanine--tRNA ligase alpha subunit, found in Colwellia psychrerythraea (strain 34H / ATCC BAA-681) (Vibrio psychroerythus).